Here is a 211-residue protein sequence, read N- to C-terminus: Probable GTP-binding protein EngB (211 aa).

Residues 22 to 195 enclose the EngB-type G domain; sequence PFPEVAFAGK…WQLIDSYVLP (174 aa). GTP-binding positions include 30-37, 57-61, 75-78, 142-145, and 174-176; these read GKSNVGKS, GKTQT, DLPG, TKLD, and FSS. Mg(2+) is bound by residues Ser-37 and Thr-59.

It belongs to the TRAFAC class TrmE-Era-EngA-EngB-Septin-like GTPase superfamily. EngB GTPase family. It depends on Mg(2+) as a cofactor.

In terms of biological role, necessary for normal cell division and for the maintenance of normal septation. In Lachnospira eligens (strain ATCC 27750 / DSM 3376 / VPI C15-48 / C15-B4) (Eubacterium eligens), this protein is Probable GTP-binding protein EngB.